The primary structure comprises 193 residues: Rho-related protein racF1 (193 aa).

Position 10–17 (10–17 (GDGAVGKT)) interacts with GTP. Positions 32 to 40 (YIPTVFDNY) match the Effector region motif. Residues 57 to 61 (DTAGQ) and 115 to 118 (TKQD) contribute to the GTP site. Cysteine 190 is modified (cysteine methyl ester). Cysteine 190 is lipidated: S-geranylgeranyl cysteine. A propeptide spans 191-193 (TIM) (removed in mature form).

The protein belongs to the small GTPase superfamily. Rho family. As to quaternary structure, interacts with pakB.

It localises to the membrane. In terms of biological role, might act in concert and/or share functions with other members of the RHO family in the regulation of a subset of cytoskeletal rearrangements that are required for these processes. The protein is Rho-related protein racF1 (racF1) of Dictyostelium discoideum (Social amoeba).